Consider the following 306-residue polypeptide: N-acetylmuramic acid 6-phosphate etherase (306 aa).

The region spanning 59-222 (ISEALRQGGR…STGAMVQLGK (164 aa)) is the SIS domain. Residue glutamate 87 is the Proton donor of the active site. The active site involves glutamate 118.

The protein belongs to the GCKR-like family. MurNAc-6-P etherase subfamily. In terms of assembly, homodimer.

It carries out the reaction N-acetyl-D-muramate 6-phosphate + H2O = N-acetyl-D-glucosamine 6-phosphate + (R)-lactate. Its pathway is amino-sugar metabolism; N-acetylmuramate degradation. Specifically catalyzes the cleavage of the D-lactyl ether substituent of MurNAc 6-phosphate, producing GlcNAc 6-phosphate and D-lactate. This Gloeothece citriformis (strain PCC 7424) (Cyanothece sp. (strain PCC 7424)) protein is N-acetylmuramic acid 6-phosphate etherase.